Here is a 179-residue protein sequence, read N- to C-terminus: Large ribosomal subunit protein uL6 (179 aa).

Belongs to the universal ribosomal protein uL6 family. In terms of assembly, part of the 50S ribosomal subunit.

Its function is as follows. This protein binds to the 23S rRNA, and is important in its secondary structure. It is located near the subunit interface in the base of the L7/L12 stalk, and near the tRNA binding site of the peptidyltransferase center. This is Large ribosomal subunit protein uL6 from Pelobacter propionicus (strain DSM 2379 / NBRC 103807 / OttBd1).